The sequence spans 293 residues: Ribosomal RNA small subunit methyltransferase A (293 aa).

Residues Asn33, Val35, Gly60, Glu81, Asp111, and Asn130 each coordinate S-adenosyl-L-methionine.

This sequence belongs to the class I-like SAM-binding methyltransferase superfamily. rRNA adenine N(6)-methyltransferase family. RsmA subfamily.

It is found in the cytoplasm. It carries out the reaction adenosine(1518)/adenosine(1519) in 16S rRNA + 4 S-adenosyl-L-methionine = N(6)-dimethyladenosine(1518)/N(6)-dimethyladenosine(1519) in 16S rRNA + 4 S-adenosyl-L-homocysteine + 4 H(+). Its function is as follows. Specifically dimethylates two adjacent adenosines (A1518 and A1519) in the loop of a conserved hairpin near the 3'-end of 16S rRNA in the 30S particle. May play a critical role in biogenesis of 30S subunits. The polypeptide is Ribosomal RNA small subunit methyltransferase A (Corynebacterium glutamicum (strain R)).